The sequence spans 378 residues: 2-aminoethylphosphonate--pyruvate transaminase 1 (378 aa).

Residue lysine 194 is modified to N6-(pyridoxal phosphate)lysine.

It belongs to the class-V pyridoxal-phosphate-dependent aminotransferase family. PhnW subfamily. In terms of assembly, homodimer. Pyridoxal 5'-phosphate is required as a cofactor.

It catalyses the reaction (2-aminoethyl)phosphonate + pyruvate = phosphonoacetaldehyde + L-alanine. Involved in phosphonate degradation. This chain is 2-aminoethylphosphonate--pyruvate transaminase 1, found in Cupriavidus pinatubonensis (strain JMP 134 / LMG 1197) (Cupriavidus necator (strain JMP 134)).